The following is a 429-amino-acid chain: Glutamate-1-semialdehyde 2,1-aminomutase (429 aa).

K265 is subject to N6-(pyridoxal phosphate)lysine.

This sequence belongs to the class-III pyridoxal-phosphate-dependent aminotransferase family. HemL subfamily. Homodimer. Requires pyridoxal 5'-phosphate as cofactor.

It localises to the cytoplasm. The catalysed reaction is (S)-4-amino-5-oxopentanoate = 5-aminolevulinate. It participates in porphyrin-containing compound metabolism; protoporphyrin-IX biosynthesis; 5-aminolevulinate from L-glutamyl-tRNA(Glu): step 2/2. The sequence is that of Glutamate-1-semialdehyde 2,1-aminomutase from Shewanella pealeana (strain ATCC 700345 / ANG-SQ1).